An 89-amino-acid polypeptide reads, in one-letter code: Small ribosomal subunit protein uS15 (89 aa).

Belongs to the universal ribosomal protein uS15 family. As to quaternary structure, part of the 30S ribosomal subunit. Forms a bridge to the 50S subunit in the 70S ribosome, contacting the 23S rRNA.

Its function is as follows. One of the primary rRNA binding proteins, it binds directly to 16S rRNA where it helps nucleate assembly of the platform of the 30S subunit by binding and bridging several RNA helices of the 16S rRNA. Functionally, forms an intersubunit bridge (bridge B4) with the 23S rRNA of the 50S subunit in the ribosome. This Mycobacterium sp. (strain JLS) protein is Small ribosomal subunit protein uS15.